The chain runs to 166 residues: Chemoreceptor glutamine deamidase CheD (166 aa).

Belongs to the CheD family. In terms of assembly, forms a complex with CheC.

It carries out the reaction L-glutaminyl-[protein] + H2O = L-glutamyl-[protein] + NH4(+). In terms of biological role, deamidates glutamine residues to glutamate on methyl-accepting chemotaxis receptors (MCPs). CheD-mediated MCP deamidation is required for productive communication of the conformational signals of the chemoreceptors to the CheA kinase. The chain is Chemoreceptor glutamine deamidase CheD from Bacillus velezensis (strain DSM 23117 / BGSC 10A6 / LMG 26770 / FZB42) (Bacillus amyloliquefaciens subsp. plantarum).